We begin with the raw amino-acid sequence, 64 residues long: Palmitoyl-CoA hydrolase (64 aa).

The protein belongs to the type-B carboxylesterase/lipase family. In terms of assembly, monomer and homotrimer.

Its subcellular location is the microsome. It localises to the endoplasmic reticulum. It catalyses the reaction hexadecanoyl-CoA + H2O = hexadecanoate + CoA + H(+). Its function is as follows. Hydrolysis of a variety of CoA thioesters of long-chain fatty acids. In Rattus norvegicus (Rat), this protein is Palmitoyl-CoA hydrolase.